Reading from the N-terminus, the 1293-residue chain is Phosphoribosylformylglycinamidine synthase (1293 aa).

ATP is bound by residues 305–316 and Ala-676; that span reads GAATGSGGEIRD. The segment at 305–328 is disordered; it reads GAATGSGGEIRDEGATGRGSKPKA. Residues Asp-677, Glu-716, Asn-720, and Asp-884 each coordinate Mg(2+). An ATP-binding site is contributed by Ser-886. Residues 1040-1293 enclose the Glutamine amidotransferase type-1 domain; it reads MAILREQGVN…MFRNARVNLG (254 aa). Cys-1133 (nucleophile) is an active-site residue. Residues His-1258 and Glu-1260 contribute to the active site.

In the N-terminal section; belongs to the FGAMS family. As to quaternary structure, monomer.

It is found in the cytoplasm. It catalyses the reaction N(2)-formyl-N(1)-(5-phospho-beta-D-ribosyl)glycinamide + L-glutamine + ATP + H2O = 2-formamido-N(1)-(5-O-phospho-beta-D-ribosyl)acetamidine + L-glutamate + ADP + phosphate + H(+). It functions in the pathway purine metabolism; IMP biosynthesis via de novo pathway; 5-amino-1-(5-phospho-D-ribosyl)imidazole from N(2)-formyl-N(1)-(5-phospho-D-ribosyl)glycinamide: step 1/2. Functionally, phosphoribosylformylglycinamidine synthase involved in the purines biosynthetic pathway. Catalyzes the ATP-dependent conversion of formylglycinamide ribonucleotide (FGAR) and glutamine to yield formylglycinamidine ribonucleotide (FGAM) and glutamate. This is Phosphoribosylformylglycinamidine synthase from Shewanella sp. (strain MR-7).